Consider the following 72-residue polypeptide: Large ribosomal subunit protein uL29 (72 aa).

This sequence belongs to the universal ribosomal protein uL29 family.

The chain is Large ribosomal subunit protein uL29 from Caldicellulosiruptor saccharolyticus (strain ATCC 43494 / DSM 8903 / Tp8T 6331).